Consider the following 620-residue polypeptide: Chaperone protein HscA homolog (620 aa).

This sequence belongs to the heat shock protein 70 family.

Its function is as follows. Chaperone involved in the maturation of iron-sulfur cluster-containing proteins. Has a low intrinsic ATPase activity which is markedly stimulated by HscB. The sequence is that of Chaperone protein HscA homolog from Pseudomonas fluorescens (strain SBW25).